We begin with the raw amino-acid sequence, 184 residues long: Interferon alpha-1 (184 aa).

The signal sequence occupies residues 1-23 (MALPVSLLMALVVLSCHSICSLG). 2 disulfides stabilise this stretch: Cys-24/Cys-122 and Cys-52/Cys-162.

Belongs to the alpha/beta interferon family. As to quaternary structure, interacts with CR2.

It is found in the secreted. Functionally, produced by macrophages, IFN-alpha have antiviral activities. Interferon stimulates the production of two enzymes: a protein kinase and an oligoadenylate synthetase. The protein is Interferon alpha-1 of Equus caballus (Horse).